The following is a 240-amino-acid chain: ATP-dependent dethiobiotin synthetase BioD (240 aa).

15–20 (EIGKTF) lines the ATP pocket. Thr-19 serves as a coordination point for Mg(2+). Residue Lys-40 is part of the active site. ATP contacts are provided by residues Asp-57, 118-121 (EGVG), and 178-179 (NR). Residues Asp-57 and Glu-118 each contribute to the Mg(2+) site.

It belongs to the dethiobiotin synthetase family. As to quaternary structure, homodimer. Requires Mg(2+) as cofactor.

It is found in the cytoplasm. It carries out the reaction (7R,8S)-7,8-diammoniononanoate + CO2 + ATP = (4R,5S)-dethiobiotin + ADP + phosphate + 3 H(+). Its pathway is cofactor biosynthesis; biotin biosynthesis; biotin from 7,8-diaminononanoate: step 1/2. Catalyzes a mechanistically unusual reaction, the ATP-dependent insertion of CO2 between the N7 and N8 nitrogen atoms of 7,8-diaminopelargonic acid (DAPA, also called 7,8-diammoniononanoate) to form a ureido ring. The protein is ATP-dependent dethiobiotin synthetase BioD of Burkholderia thailandensis (strain ATCC 700388 / DSM 13276 / CCUG 48851 / CIP 106301 / E264).